A 434-amino-acid polypeptide reads, in one-letter code: Beta-glucuronosyltransferase GlcAT14B (434 aa).

Residues 1–21 (MKKLKSYYMQVRNQQQSLDRK) are Cytoplasmic-facing. A signal-anchor for type II membrane protein membrane pass occupies residues 22–42 (WILPLAIGSICSLFLLLLTNL). Residues 43 to 434 (ASSSGQTRLI…TENFRPRQCR (392 aa)) lie on the Lumenal side of the membrane. Residues asparagine 138, asparagine 187, asparagine 316, and asparagine 392 are each glycosylated (N-linked (GlcNAc...) asparagine).

This sequence belongs to the glycosyltransferase 14 family.

It is found in the golgi apparatus membrane. Beta-glucuronosyltransferase involved in the biosynthesis of type II arabinogalactan (AG). Modifies both the beta-1,6-linked galactan and beta-1,3-linked galactan present in type II AG. This Arabidopsis thaliana (Mouse-ear cress) protein is Beta-glucuronosyltransferase GlcAT14B.